Consider the following 222-residue polypeptide: DnaJ homolog subfamily B member 9 (222 aa).

The N-terminal stretch at 1–23 (MATPQSVFVFAICILMITELILA) is a signal peptide. Residues 26 to 90 (SYYDILGVPK…NSRKEYDTIG (65 aa)) form the J domain. Positions 91–222 (HSAFTNGKGQ…VTTYTDCSGQ (132 aa)) are divergent targeting domain. Ser133 is subject to Phosphoserine.

Interacts with HSPA5/BiP; interaction is direct. Interacts with ERN1/IRE1 (via the luminal region). Interacts with DERL1. In terms of processing, not N-glycosylated.

Its subcellular location is the endoplasmic reticulum lumen. Co-chaperone for Hsp70 protein HSPA5/BiP that acts as a key repressor of the ERN1/IRE1-mediated unfolded protein response (UPR). J domain-containing co-chaperones stimulate the ATPase activity of Hsp70 proteins and are required for efficient substrate recognition by Hsp70 proteins. In the unstressed endoplasmic reticulum, interacts with the luminal region of ERN1/IRE1 and selectively recruits HSPA5/BiP: HSPA5/BiP disrupts the dimerization of the active ERN1/IRE1 luminal region, thereby inactivating ERN1/IRE1. Also involved in endoplasmic reticulum-associated degradation (ERAD) of misfolded proteins. Required for survival of B-cell progenitors and normal antibody production. This chain is DnaJ homolog subfamily B member 9, found in Mus musculus (Mouse).